The chain runs to 485 residues: Forkhead box protein N3 (485 aa).

The tract at residues 1 to 21 (MGPVMPPSKKPESPGISVSSG) is disordered. Serine 83, serine 85, and serine 97 each carry phosphoserine. Residues 86–108 (PVQDLDDDTPPSPAHSDMPYDAR) form a disordered region. The segment at residues 114 to 210 (KPPYSFSCLI…QALKKTPYHS (97 aa)) is a DNA-binding region (fork-head). Positions 315–454 (RTESEPSCGS…DEEMKEAAGS (140 aa)) are disordered. Positions 338–359 (SSAKSSHARSTSPASDCVSSSS) are enriched in low complexity. Over residues 382 to 404 (HESHSETEEDDRKCSPKEAKDAL) the composition is skewed to basic and acidic residues. Residues 412–424 (QHKKRQHFAKARK) show a composition bias toward basic residues. Serine 443 is subject to Phosphoserine.

In terms of assembly, interacts through its C-terminus with the C-terminus of SNW1/SKIP.

Its subcellular location is the nucleus. Functionally, acts as a transcriptional repressor. May be involved in DNA damage-inducible cell cycle arrests (checkpoints). This chain is Forkhead box protein N3 (FOXN3), found in Sus scrofa (Pig).